We begin with the raw amino-acid sequence, 611 residues long: uncharacterized protein (611 aa).

The protein belongs to the metallo-dependent hydrolases superfamily. N-acyl-D-amino-acid deacylase family.

This is an uncharacterized protein from Mycobacterium bovis (strain ATCC BAA-935 / AF2122/97).